Reading from the N-terminus, the 669-residue chain is UvrABC system protein B (669 aa).

A Helicase ATP-binding domain is found at 26-414 (EGLEDGLAHQ…SGDVVEQVVR (389 aa)). 39–46 (GVTGSGKT) is a binding site for ATP. The short motif at 92–115 (YYDYYQPEAYVPSSDTFIEKDASV) is the Beta-hairpin element. The Helicase C-terminal domain occupies 431–597 (QVDDLLSEIR…GLNKKINDIL (167 aa)). The region spanning 629 to 664 (ESKIRELEAKMYQHAQDLEFEQAASVRDQVQALREQ) is the UVR domain.

This sequence belongs to the UvrB family. In terms of assembly, forms a heterotetramer with UvrA during the search for lesions. Interacts with UvrC in an incision complex.

Its subcellular location is the cytoplasm. Functionally, the UvrABC repair system catalyzes the recognition and processing of DNA lesions. A damage recognition complex composed of 2 UvrA and 2 UvrB subunits scans DNA for abnormalities. Upon binding of the UvrA(2)B(2) complex to a putative damaged site, the DNA wraps around one UvrB monomer. DNA wrap is dependent on ATP binding by UvrB and probably causes local melting of the DNA helix, facilitating insertion of UvrB beta-hairpin between the DNA strands. Then UvrB probes one DNA strand for the presence of a lesion. If a lesion is found the UvrA subunits dissociate and the UvrB-DNA preincision complex is formed. This complex is subsequently bound by UvrC and the second UvrB is released. If no lesion is found, the DNA wraps around the other UvrB subunit that will check the other stand for damage. This Photorhabdus laumondii subsp. laumondii (strain DSM 15139 / CIP 105565 / TT01) (Photorhabdus luminescens subsp. laumondii) protein is UvrABC system protein B.